Reading from the N-terminus, the 309-residue chain is Porphobilinogen deaminase (309 aa).

Residue C241 is modified to S-(dipyrrolylmethanemethyl)cysteine.

It belongs to the HMBS family. As to quaternary structure, monomer. Dipyrromethane is required as a cofactor.

The catalysed reaction is 4 porphobilinogen + H2O = hydroxymethylbilane + 4 NH4(+). Its pathway is porphyrin-containing compound metabolism; protoporphyrin-IX biosynthesis; coproporphyrinogen-III from 5-aminolevulinate: step 2/4. In terms of biological role, tetrapolymerization of the monopyrrole PBG into the hydroxymethylbilane pre-uroporphyrinogen in several discrete steps. The polypeptide is Porphobilinogen deaminase (Bacillus cereus (strain B4264)).